Consider the following 240-residue polypeptide: Ribosomal RNA large subunit methyltransferase E (240 aa).

Residues 1 to 20 (MSKAGGNKGGSRTGGRGGAG) are compositionally biased toward gly residues. The disordered stretch occupies residues 1-40 (MSKAGGNKGGSRTGGRGGAGSSNLHVRVKKKAGTTKESSR). S-adenosyl-L-methionine is bound by residues Gly92, Trp94, Asp115, Asp131, and Asp155. Lys195 functions as the Proton acceptor in the catalytic mechanism.

The protein belongs to the class I-like SAM-binding methyltransferase superfamily. RNA methyltransferase RlmE family.

The protein resides in the cytoplasm. The catalysed reaction is uridine(2552) in 23S rRNA + S-adenosyl-L-methionine = 2'-O-methyluridine(2552) in 23S rRNA + S-adenosyl-L-homocysteine + H(+). Its function is as follows. Specifically methylates the uridine in position 2552 of 23S rRNA at the 2'-O position of the ribose in the fully assembled 50S ribosomal subunit. The protein is Ribosomal RNA large subunit methyltransferase E of Brucella ovis (strain ATCC 25840 / 63/290 / NCTC 10512).